Here is a 398-residue protein sequence, read N- to C-terminus: Dual specificity mitogen-activated protein kinase kinase 2 (398 aa).

The disordered stretch occupies residues 1–29; it reads MPAKRKPVLPALTITPSPAEGPGPGGSAE. The region spanning 70 to 367 is the Protein kinase domain; that stretch reads FERISELGAG…LKMLMNHTFI (298 aa). Residues 76–84 and K99 contribute to the ATP site; that span reads LGAGNGGVV. The active-site Proton acceptor is D192. S220 and S224 each carry phosphoserine; by RAF.

The protein belongs to the protein kinase superfamily. STE Ser/Thr protein kinase family. MAP kinase kinase subfamily. Post-translationally, activated by phosphorylation on Ser/Thr catalyzed by MAP kinase kinase kinases (RAF).

The catalysed reaction is L-seryl-[protein] + ATP = O-phospho-L-seryl-[protein] + ADP + H(+). It catalyses the reaction L-threonyl-[protein] + ATP = O-phospho-L-threonyl-[protein] + ADP + H(+). The enzyme catalyses L-tyrosyl-[protein] + ATP = O-phospho-L-tyrosyl-[protein] + ADP + H(+). Its function is as follows. Catalyzes the concomitant phosphorylation of a threonine and a tyrosine residue in a Thr-Glu-Tyr sequence located in MAP kinases. Activates the ERK1 and ERK2 MAP kinases. In Gallus gallus (Chicken), this protein is Dual specificity mitogen-activated protein kinase kinase 2 (MAP2K2).